A 536-amino-acid chain; its full sequence is Protein GvpD1 (536 aa).

Gly-39–Thr-46 contacts ATP. Positions Gly-352–Asp-413 are disordered. Residues Pro-363–Met-372 show a composition bias toward polar residues. Positions Ala-373–Thr-385 are enriched in low complexity. Residues His-386 to Arg-396 are compositionally biased toward basic and acidic residues.

It belongs to the gas vesicle GvpD family. In terms of assembly, interacts with GvpE.

The protein resides in the cytoplasm. In terms of biological role, causes a decrease in the amount of GvpE protein. The 5'-region of its promoter or mRNA has a repressive function on downstream genes. Gas vesicles are hollow, gas filled proteinaceous nanostructures found in several microbial planktonic microorganisms. They allow positioning of halobacteria at the optimal depth for growth in the poorly aerated, shallow brine pools of their habitat. Expression of a 9.5 kb p-vac DNA fragment containing 2 divergently transcribed regions (gvpD-gvpE-gvpF-gvpG-gvpH-gvpI-gvpJ-gvpK-gvpL-gvpM and gvpA-gvpC-gvpN-gvpO) allows H.volcanii to produce gas vesicles. A similar region restores gas vesicle production in H.halobium without the p-vac locus, but it still has the c-vac locus. The polypeptide is Protein GvpD1 (gvpD11) (Halobacterium salinarum (strain ATCC 700922 / JCM 11081 / NRC-1) (Halobacterium halobium)).